The primary structure comprises 490 residues: MTKALLKDLNARDAPLREQLEQEATSLPKIVLSERQFCDVELILNGGFSPLDGFMNQKDYLNVVENLRLSTGEVFPIPITLDLNESQADSLKAGDRVALLDPRDGQTVIAILTVEDKYTPDKANEAEKVFGANDRAHPAVDYLFGRAGNVYVGGKLQAVTPIRHFDFVEYRYSPAQLRSDFQRNNWNRVVAFQTRNPMHRAHRELTVRAAKQHGARVLIHPVVGMTKPGDIDHFTRVRVYEAILQRYPKGSAKLSLLPLAMRMAGPREALWHAIIRKNYGASHFIIGRDHAGPGKNSQGEDFYGPYDAQYLVEQYAQEIGITIVPFQMMTYLPDEDIYKPVDKVEPGTRTLNISGTELRRRLRVGANIPEWFSYPEVVAILRQSYPPKYSQGFVLAVPATSDKLLPSALVSALNEDGRRHVTLLPRLDAISVFYAQELQRAGAAVVVSLADADASVKVPAEWTTVNIKPKDSVSEVTFAVLSQLSDEGYL.

The segment at 1–165 is N-terminal; it reads MTKALLKDLN…LQAVTPIRHF (165 aa). The tract at residues 166 to 390 is catalytic; it reads DFVEYRYSPA…LRQSYPPKYS (225 aa). Gln-193 is a binding site for sulfate. ATP-binding positions include 193 to 196 and 287 to 290; these read QTRN and GRDH. Catalysis depends on residues Thr-194, Arg-195, and Asn-196. Position 195 (Arg-195) interacts with sulfate. Ala-291 provides a ligand contact to sulfate. An ATP-binding site is contributed by Met-329. Residue Thr-356 is modified to Phosphothreonine. Residues 391 to 490 form a required for oligomerization; adenylyl-sulfate kinase-like region; that stretch reads QGFVLAVPAT…LSQLSDEGYL (100 aa).

It belongs to the sulfate adenylyltransferase family. Homohexamer. Dimer of trimers.

The protein localises to the cytoplasm. It carries out the reaction sulfate + ATP + H(+) = adenosine 5'-phosphosulfate + diphosphate. It functions in the pathway sulfur metabolism; hydrogen sulfide biosynthesis; sulfite from sulfate: step 1/3. Functionally, catalyzes the first intracellular reaction of sulfate assimilation, forming adenosine-5'-phosphosulfate (APS) from inorganic sulfate and ATP. Plays an important role in sulfate activation as a component of the biosynthesis pathway of sulfur-containing amino acids. The polypeptide is Sulfate adenylyltransferase (sua1) (Schizosaccharomyces pombe (strain 972 / ATCC 24843) (Fission yeast)).